The sequence spans 597 residues: Probable tyrosine-protein phosphatase (597 aa).

A compositionally biased stretch (low complexity) spans Val-55–Ala-81. Disordered stretches follow at residues Val-55–Tyr-89, Ser-107–Leu-172, and Ser-188–Asn-228. A compositionally biased stretch (polar residues) spans Ser-107–Leu-126. A compositionally biased stretch (low complexity) spans Thr-136–Ser-151. Polar residues-rich tracts occupy residues Ser-188 to Arg-206 and Lys-216 to Asn-228. The Tyrosine-protein phosphatase domain maps to Gly-428–Asn-579. Cys-516 functions as the Phosphocysteine intermediate in the catalytic mechanism.

It belongs to the protein-tyrosine phosphatase family. Non-receptor class dual specificity subfamily.

The enzyme catalyses O-phospho-L-tyrosyl-[protein] + H2O = L-tyrosyl-[protein] + phosphate. The chain is Probable tyrosine-protein phosphatase (CPP1) from Candida albicans (strain WO-1) (Yeast).